The chain runs to 160 residues: Peripheral myelin protein 22 (160 aa).

Residue Met1 is a topological domain, cytoplasmic. A helical membrane pass occupies residues 2-31 (LLLLLGILFLHIAVLVLLFVSTIVSQWLVG). Over 32–64 (NGHRTDLWQNCTTSALGAVQHCYSSSVSEWLQS) the chain is Extracellular. N-linked (GlcNAc...) asparagine glycosylation occurs at Asn41. The helical transmembrane segment at 65-91 (VQATMILSVIFSVLSLFLFFCQLFTLT) threads the bilayer. The Cytoplasmic portion of the chain corresponds to 92–95 (KGGR). A helical transmembrane segment spans residues 96–119 (FYITGVFQILAGLCVMSAAAIYTV). The Extracellular segment spans residues 120-133 (RHSEWHVNNDYSYG). The chain crosses the membrane as a helical span at residues 134–156 (FAYILAWVAFPLALLSGIIYVIL). The Cytoplasmic segment spans residues 157–160 (RKRE).

The protein belongs to the PMP-22/EMP/MP20 family. In terms of processing, ubiquitinated by the DCX(DCAF13) E3 ubiquitin ligase complex, leading to its degradation. As to expression, found exclusively in the peripheral nervous system. Present in both myelinating and nonmyelinating Schwann cells. Found in the tumors of Schwann cell lineage where axons are present (neurofibromas) but not where axons are absent (schwannomas).

Its subcellular location is the cell membrane. In terms of biological role, might be involved in growth regulation, and in myelinization in the peripheral nervous system. The sequence is that of Peripheral myelin protein 22 (Pmp22) from Rattus norvegicus (Rat).